The chain runs to 356 residues: S-adenosylmethionine:tRNA ribosyltransferase-isomerase (356 aa).

This sequence belongs to the QueA family. As to quaternary structure, monomer.

Its subcellular location is the cytoplasm. It catalyses the reaction 7-aminomethyl-7-carbaguanosine(34) in tRNA + S-adenosyl-L-methionine = epoxyqueuosine(34) in tRNA + adenine + L-methionine + 2 H(+). It participates in tRNA modification; tRNA-queuosine biosynthesis. Functionally, transfers and isomerizes the ribose moiety from AdoMet to the 7-aminomethyl group of 7-deazaguanine (preQ1-tRNA) to give epoxyqueuosine (oQ-tRNA). This chain is S-adenosylmethionine:tRNA ribosyltransferase-isomerase, found in Xanthomonas campestris pv. campestris (strain B100).